Consider the following 333-residue polypeptide: Autoinducer 2 import system permease protein LsrD (333 aa).

The next 10 membrane-spanning stretches (helical) occupy residues Tyr-7–Ser-27, Ile-45–Ile-65, Phe-67–Pro-87, Val-90–Ile-110, Leu-118–Leu-138, Leu-162–Leu-182, Thr-212–Val-232, Ser-240–Asn-260, Ile-261–Leu-281, and Ile-288–Val-308.

Belongs to the binding-protein-dependent transport system permease family. AraH/RbsC subfamily. In terms of assembly, the complex is composed of two ATP-binding proteins (LsrA), two transmembrane proteins (LsrC and LsrD) and a solute-binding protein (LsrB).

The protein localises to the cell inner membrane. Its function is as follows. Part of the ABC transporter complex LsrABCD involved in autoinducer 2 (AI-2) import. Probably responsible for the translocation of the substrate across the membrane. This chain is Autoinducer 2 import system permease protein LsrD (lsrD), found in Yersinia pestis bv. Antiqua (strain Antiqua).